A 138-amino-acid polypeptide reads, in one-letter code: uncharacterized protein (138 aa).

This is an uncharacterized protein from Caenorhabditis elegans.